Reading from the N-terminus, the 504-residue chain is Glucose-6-phosphate isomerase (504 aa).

Glu-333 acts as the Proton donor in catalysis. Catalysis depends on residues His-364 and Lys-473.

The protein belongs to the GPI family.

The protein resides in the cytoplasm. It catalyses the reaction alpha-D-glucose 6-phosphate = beta-D-fructose 6-phosphate. Its pathway is carbohydrate biosynthesis; gluconeogenesis. It functions in the pathway carbohydrate degradation; glycolysis; D-glyceraldehyde 3-phosphate and glycerone phosphate from D-glucose: step 2/4. In terms of biological role, catalyzes the reversible isomerization of glucose-6-phosphate to fructose-6-phosphate. The polypeptide is Glucose-6-phosphate isomerase (Xanthomonas oryzae pv. oryzae (strain PXO99A)).